We begin with the raw amino-acid sequence, 476 residues long: Oogenesin-2 (476 aa).

The stretch at 97-121 (RCKLREITLSHDLVVVWAGSHEVEG) is one LRR 1; degenerate repeat. The LRR 2; degenerate repeat unit spans residues 176–200 (HLHCRKLKIYGLTKAAVIEMFKIVH). The LRR 3; degenerate repeat unit spans residues 201-226 (AEYIEDLELSCLCLEYLDFLNPYLKQ). Residues 227–264 (MSNLLSLTLDEIIYTLNIDDYRNLNEEKVITVISHLPT) form an LRR 4; degenerate repeat. 4 LRR repeats span residues 265–285 (FHHLQELYVHGVIFIECLRCL), 286–317 (KKPLEVLSFTDCDLSQSDLDYLPYCLNIFELR), 342–369 (RHTLKSLQLMSCEMGETHFNALLPALSQ), and 370–394 (CYQLTVVNFYGNELSLLFLKKLLHH).

It belongs to the PRAME family. In terms of tissue distribution, expressed in ovary, specifically in oocytes. Detected in follicles with two layers of granulosa cells, and are present in early as well as large antral follicles.

The polypeptide is Oogenesin-2 (Mus musculus (Mouse)).